The primary structure comprises 442 residues: Probable D-serine dehydratase (442 aa).

Residue Lys-111 is modified to N6-(pyridoxal phosphate)lysine.

It belongs to the serine/threonine dehydratase family. DsdA subfamily. Pyridoxal 5'-phosphate serves as cofactor.

It carries out the reaction D-serine = pyruvate + NH4(+). The protein is Probable D-serine dehydratase of Sinorhizobium medicae (strain WSM419) (Ensifer medicae).